A 236-amino-acid polypeptide reads, in one-letter code: MDSLKKIVAYKAVDEYVQSNMTIGLGTGSTVFYVLERIDNLLKSGKLKDVVCIPTSIDTELKARKLGIPLTTLEKHSNIDITIDGTDEIDLNLNLIKGRGGALVREKLVASSSSLFIIIGDESKLCTNGLGMTGAVPIEILTFGYEKIIENLLKIYTLKGCTYKIRKRNGEIFITDNKNYIVDFFFTEPIQDLLETCTRIKMTTGVVDHGIFVNMTNVALISKHDGTVLTLNKKYE.

Residues 27–30, 84–87, and 97–100 contribute to the substrate site; these read TGST, DGTD, and KGRG. E106 functions as the Proton acceptor in the catalytic mechanism. Substrate is bound at residue K124.

Belongs to the ribose 5-phosphate isomerase family. In terms of assembly, homodimer.

It catalyses the reaction aldehydo-D-ribose 5-phosphate = D-ribulose 5-phosphate. It functions in the pathway carbohydrate degradation; pentose phosphate pathway; D-ribose 5-phosphate from D-ribulose 5-phosphate (non-oxidative stage): step 1/1. Involved in the first step of the non-oxidative branch of the pentose phosphate pathway. It catalyzes the reversible conversion of ribose-5-phosphate to ribulose 5-phosphate. The chain is Ribose-5-phosphate isomerase from Plasmodium falciparum (isolate 3D7).